Here is a 94-residue protein sequence, read N- to C-terminus: Co-chaperonin GroES (94 aa).

Belongs to the GroES chaperonin family. As to quaternary structure, heptamer of 7 subunits arranged in a ring. Interacts with the chaperonin GroEL.

The protein localises to the cytoplasm. Together with the chaperonin GroEL, plays an essential role in assisting protein folding. The GroEL-GroES system forms a nano-cage that allows encapsulation of the non-native substrate proteins and provides a physical environment optimized to promote and accelerate protein folding. GroES binds to the apical surface of the GroEL ring, thereby capping the opening of the GroEL channel. This Enterococcus faecalis (strain ATCC 700802 / V583) protein is Co-chaperonin GroES.